A 140-amino-acid chain; its full sequence is Large ribosomal subunit protein uL14 (140 aa).

The protein belongs to the universal ribosomal protein uL14 family.

In Drosophila melanogaster (Fruit fly), this protein is Large ribosomal subunit protein uL14 (RpL23).